The following is a 493-amino-acid chain: UDP-glucose 6-dehydrogenase (493 aa).

Residues 11–16 (GAGYVG), Asp-36, Arg-41, and 89–93 (VNTPT) contribute to the NAD(+) site. The disordered stretch occupies residues 88 to 110 (SVNTPTKTYGMGKGRAADLKYIE). The residue at position 107 (Lys-107) is an N6-acetyllysine. Residues 129 to 135 (KSTVPVR) form an allosteric switch region region. 130–132 (STV) contributes to the NAD(+) binding site. The active-site Proton donor/acceptor is Glu-161. Residues 161-165 (EFLAE), 220-224 (KLAAN), Arg-260, and 267-273 (KASVGFG) contribute to the substrate site. Glu-165 contributes to the NAD(+) binding site. Lys-220 acts as the Proton donor/acceptor in catalysis. Cys-276 serves as the catalytic Nucleophile. Residue 276–279 (CFQK) participates in NAD(+) binding. The segment at 321 to 325 (SLFNT) is important for formation of active hexamer structure. Position 338-339 (338-339 (FK)) interacts with substrate. Arg-346 provides a ligand contact to NAD(+). Substrate is bound at residue Arg-442. The tract at residues 466 to 493 (VSSKRIPYTPGEIPKFSLQDPPNKKPKV) is disordered. Residue Thr-474 is modified to Phosphothreonine.

Belongs to the UDP-glucose/GDP-mannose dehydrogenase family. Homohexamer.

The enzyme catalyses UDP-alpha-D-glucose + 2 NAD(+) + H2O = UDP-alpha-D-glucuronate + 2 NADH + 3 H(+). It functions in the pathway nucleotide-sugar biosynthesis; UDP-alpha-D-glucuronate biosynthesis; UDP-alpha-D-glucuronate from UDP-alpha-D-glucose: step 1/1. UDP-alpha-D-xylose (UDX) acts as a feedback inhibitor. It binds at the same site as the substrate, but functions as allosteric inhibitor by triggering a conformation change that disrupts the active hexameric ring structure and gives rise to an inactive, horseshoe-shaped hexamer. In terms of biological role, catalyzes the formation of UDP-alpha-D-glucuronate, a constituent of complex glycosaminoglycans. Required for the biosynthesis of chondroitin sulfate and heparan sulfate. Required for embryonic development via its role in the biosynthesis of glycosaminoglycans. Required for proper brain and neuronal development. The polypeptide is UDP-glucose 6-dehydrogenase (Ugdh) (Mus musculus (Mouse)).